Reading from the N-terminus, the 122-residue chain is Small ribosomal subunit protein uS13 (122 aa).

Residues 94-122 (KQLPVRGQRTHTNARTRKGKAKPIAGKKK) are disordered.

Belongs to the universal ribosomal protein uS13 family. Part of the 30S ribosomal subunit. Forms a loose heterodimer with protein S19. Forms two bridges to the 50S subunit in the 70S ribosome.

Its function is as follows. Located at the top of the head of the 30S subunit, it contacts several helices of the 16S rRNA. In the 70S ribosome it contacts the 23S rRNA (bridge B1a) and protein L5 of the 50S subunit (bridge B1b), connecting the 2 subunits; these bridges are implicated in subunit movement. Contacts the tRNAs in the A and P-sites. The protein is Small ribosomal subunit protein uS13 of Methylorubrum extorquens (strain PA1) (Methylobacterium extorquens).